The chain runs to 520 residues: GMP synthase [glutamine-hydrolyzing] (520 aa).

The 195-residue stretch at R8–D202 folds into the Glutamine amidotransferase type-1 domain. C86 acts as the Nucleophile in catalysis. Residues H177 and E179 contribute to the active site. In terms of domain architecture, GMPS ATP-PPase spans W203–R395. S230 to S236 contributes to the ATP binding site.

Homodimer.

It carries out the reaction XMP + L-glutamine + ATP + H2O = GMP + L-glutamate + AMP + diphosphate + 2 H(+). It functions in the pathway purine metabolism; GMP biosynthesis; GMP from XMP (L-Gln route): step 1/1. In terms of biological role, catalyzes the synthesis of GMP from XMP. This is GMP synthase [glutamine-hydrolyzing] from Ruegeria sp. (strain TM1040) (Silicibacter sp.).